The following is a 390-amino-acid chain: Protein snail (390 aa).

Residues 1–20 (MAANYKSCPLKKRPIVFVEE) form an SNAG domain region. 2 disordered regions span residues 29-65 (ALTK…PKRD) and 162-191 (QSVY…DLSV). Polar residues-rich tracts occupy residues 32-43 (KDSQFAQDQPQD) and 162-172 (QSVYSYQQMTP). 5 C2H2-type zinc fingers span residues 245 to 267 (FKCD…RQFH), 280 to 302 (HSCE…IRTH), 306 to 328 (CKCP…IRTH), 334 to 356 (FQCP…QQTH), and 362 to 385 (YACQ…SSNC).

The protein belongs to the snail C2H2-type zinc-finger protein family.

The protein localises to the nucleus. Essential for the correct specification of ventral-dorsal patterns. This Drosophila melanogaster (Fruit fly) protein is Protein snail (sna).